The sequence spans 282 residues: MLVKEIKLLRNIIKDWRKHGYSIGLVTTMGFLHEGHQSLIKKAVKENDKVVVSVFVNPTQFGPNEDFNSYPRDIDKDFKYCMDSGATVVFNPSPEEMYLKGNCTTINVSGLTDFLCGAKRPVHFGGVCLVVSKFLNIVTPDKAYFGEKDAQQLAVIKRMVKDLNIDTEIIGCPIIRENDGLAKSSRNTYLSEEERKSALILNKSLSLAKEELVKGNLNPENIKELITAKINSEHLAKIDYVEIVDSETLQPVKQIEHSILVAIAVFIGKTRLIDNFTFELNI.

Residue 29–36 (MGFLHEGH) participates in ATP binding. His-36 functions as the Proton donor in the catalytic mechanism. A (R)-pantoate-binding site is contributed by Gln-60. Gln-60 contributes to the beta-alanine binding site. Residue 146-149 (GEKD) coordinates ATP. Residue Gln-152 participates in (R)-pantoate binding. ATP contacts are provided by residues Ile-175 and 183–186 (KSSR).

This sequence belongs to the pantothenate synthetase family. Homodimer.

The protein localises to the cytoplasm. It carries out the reaction (R)-pantoate + beta-alanine + ATP = (R)-pantothenate + AMP + diphosphate + H(+). The protein operates within cofactor biosynthesis; (R)-pantothenate biosynthesis; (R)-pantothenate from (R)-pantoate and beta-alanine: step 1/1. Functionally, catalyzes the condensation of pantoate with beta-alanine in an ATP-dependent reaction via a pantoyl-adenylate intermediate. This chain is Pantothenate synthetase, found in Clostridioides difficile (strain 630) (Peptoclostridium difficile).